The primary structure comprises 197 residues: Adenylyl-sulfate kinase (197 aa).

33-40 (GLSGSGKS) serves as a coordination point for ATP. The Phosphoserine intermediate role is filled by serine 107.

The protein belongs to the APS kinase family.

It carries out the reaction adenosine 5'-phosphosulfate + ATP = 3'-phosphoadenylyl sulfate + ADP + H(+). The protein operates within sulfur metabolism; hydrogen sulfide biosynthesis; sulfite from sulfate: step 2/3. Its function is as follows. Catalyzes the synthesis of activated sulfate. In Bacillus velezensis (strain DSM 23117 / BGSC 10A6 / LMG 26770 / FZB42) (Bacillus amyloliquefaciens subsp. plantarum), this protein is Adenylyl-sulfate kinase.